The primary structure comprises 40 residues: LVSMVDERAVAWRAHAMGNPVNLPWKLAAANLVPTSTAQK.

This Pinus strobus (Eastern white pine) protein is Putative NAD(P)-dependent glyceraldehyde-3-phosphate dehydrogenase PS5.